A 589-amino-acid polypeptide reads, in one-letter code: Aspartate--tRNA ligase (589 aa).

An L-aspartate-binding site is contributed by Glu171. Positions 195 to 198 (QLFK) are aspartate. An L-aspartate-binding site is contributed by Arg217. Residues 217–219 (RDE) and Gln226 each bind ATP. His448 contributes to the L-aspartate binding site. Residue Glu482 coordinates ATP. Arg489 serves as a coordination point for L-aspartate. Residue 534-537 (GLDR) participates in ATP binding.

The protein belongs to the class-II aminoacyl-tRNA synthetase family. Type 1 subfamily. Homodimer.

The protein resides in the cytoplasm. The enzyme catalyses tRNA(Asp) + L-aspartate + ATP = L-aspartyl-tRNA(Asp) + AMP + diphosphate. Functionally, catalyzes the attachment of L-aspartate to tRNA(Asp) in a two-step reaction: L-aspartate is first activated by ATP to form Asp-AMP and then transferred to the acceptor end of tRNA(Asp). This chain is Aspartate--tRNA ligase, found in Idiomarina loihiensis (strain ATCC BAA-735 / DSM 15497 / L2-TR).